The primary structure comprises 246 residues: MFQLPILNFSPQQVAGVCETLEESGDVERLGRFLWSLPVAPAACEALNKNESVLRARAIVAFHGGNYRELYHILENHKFTKESHAKLQALWLEAHYQEAEKLRGRPLGPVDKYRVRKKFPLPRTIWDGEQKTHCFKERTRHLLREWYLQDPYPNPSKKRELAQATGLTPTQVGNWFKNRRQRDRAAAAKNRLQQQVLSQGSGRALRAEGDGTPEVLGVATSPAASLSSKAATSAISITSSDSECDI.

The homeobox DNA-binding region spans G128–A187. The interval N190–I246 is disordered. Positions R191 to S201 are enriched in polar residues. A Phosphothreonine modification is found at T212. The segment covering A219–I246 has biased composition (low complexity). Residues S221, S225, S227, and S228 each carry the phosphoserine modification.

The protein belongs to the SIX/Sine oculis homeobox family. In terms of assembly, interacts with TLE4 and TLE5. As to expression, expressed in the developing and adult retina. Also expressed in the hypothalamic and the pituitary regions.

It localises to the nucleus. Functionally, may be involved in eye development. The chain is Homeobox protein SIX6 (SIX6) from Homo sapiens (Human).